The sequence spans 274 residues: 2,3,4,5-tetrahydropyridine-2,6-dicarboxylate N-succinyltransferase (274 aa).

Substrate-binding residues include arginine 104 and aspartate 141.

It belongs to the transferase hexapeptide repeat family. Homotrimer.

The protein localises to the cytoplasm. It catalyses the reaction (S)-2,3,4,5-tetrahydrodipicolinate + succinyl-CoA + H2O = (S)-2-succinylamino-6-oxoheptanedioate + CoA. It functions in the pathway amino-acid biosynthesis; L-lysine biosynthesis via DAP pathway; LL-2,6-diaminopimelate from (S)-tetrahydrodipicolinate (succinylase route): step 1/3. The chain is 2,3,4,5-tetrahydropyridine-2,6-dicarboxylate N-succinyltransferase from Edwardsiella ictaluri (strain 93-146).